Here is a 471-residue protein sequence, read N- to C-terminus: Glutamate--tRNA ligase (471 aa).

A 'HIGH' region motif is present at residues 9–19 (PSPTGYLHVGG). Zn(2+)-binding residues include Cys98, Cys100, Cys125, and His127. The short motif at 237 to 241 (KLSKR) is the 'KMSKS' region element. Lys240 contributes to the ATP binding site.

It belongs to the class-I aminoacyl-tRNA synthetase family. Glutamate--tRNA ligase type 1 subfamily. In terms of assembly, monomer. It depends on Zn(2+) as a cofactor.

The protein resides in the cytoplasm. The catalysed reaction is tRNA(Glu) + L-glutamate + ATP = L-glutamyl-tRNA(Glu) + AMP + diphosphate. In terms of biological role, catalyzes the attachment of glutamate to tRNA(Glu) in a two-step reaction: glutamate is first activated by ATP to form Glu-AMP and then transferred to the acceptor end of tRNA(Glu). This is Glutamate--tRNA ligase from Escherichia coli (strain SMS-3-5 / SECEC).